The following is a 509-amino-acid chain: Cobyric acid synthase (509 aa).

Residues 262–459 (ELKVGIIKLP…IHGIFENDDW (198 aa)) form the GATase cobBQ-type domain. The Nucleophile role is filled by Cys343. His451 is an active-site residue.

Belongs to the CobB/CobQ family. CobQ subfamily.

The protein operates within cofactor biosynthesis; adenosylcobalamin biosynthesis. Catalyzes amidations at positions B, D, E, and G on adenosylcobyrinic A,C-diamide. NH(2) groups are provided by glutamine, and one molecule of ATP is hydrogenolyzed for each amidation. In Prochlorococcus marinus subsp. pastoris (strain CCMP1986 / NIES-2087 / MED4), this protein is Cobyric acid synthase.